The following is a 556-amino-acid chain: Formate--tetrahydrofolate ligase (556 aa).

An ATP-binding site is contributed by Thr-65 to Thr-72.

It belongs to the formate--tetrahydrofolate ligase family.

The enzyme catalyses (6S)-5,6,7,8-tetrahydrofolate + formate + ATP = (6R)-10-formyltetrahydrofolate + ADP + phosphate. The protein operates within one-carbon metabolism; tetrahydrofolate interconversion. The chain is Formate--tetrahydrofolate ligase from Symbiobacterium thermophilum (strain DSM 24528 / JCM 14929 / IAM 14863 / T).